Consider the following 405-residue polypeptide: Multidrug resistance protein MdtA (405 aa).

Positions Met-1–Ala-22 are cleaved as a signal peptide. The span at Val-35–Ser-52 shows a compositional bias: polar residues. A disordered region spans residues Val-35–Val-62.

This sequence belongs to the membrane fusion protein (MFP) (TC 8.A.1) family. As to quaternary structure, part of a tripartite efflux system composed of MdtA, MdtB and MdtC.

Its subcellular location is the cell inner membrane. In Erwinia amylovora (strain ATCC 49946 / CCPPB 0273 / Ea273 / 27-3), this protein is Multidrug resistance protein MdtA.